The primary structure comprises 192 residues: Glycerol-3-phosphate acyltransferase (192 aa).

Transmembrane regions (helical) follow at residues 4 to 24 (MFWL…AILL), 54 to 74 (LAVL…VLAG), 80 to 100 (PSQQ…PLYF), 112 to 132 (AGVL…AWLL), and 154 to 174 (LLAW…LLIV).

This sequence belongs to the PlsY family. In terms of assembly, probably interacts with PlsX.

It is found in the cell inner membrane. The catalysed reaction is an acyl phosphate + sn-glycerol 3-phosphate = a 1-acyl-sn-glycero-3-phosphate + phosphate. It participates in lipid metabolism; phospholipid metabolism. Functionally, catalyzes the transfer of an acyl group from acyl-phosphate (acyl-PO(4)) to glycerol-3-phosphate (G3P) to form lysophosphatidic acid (LPA). This enzyme utilizes acyl-phosphate as fatty acyl donor, but not acyl-CoA or acyl-ACP. This Pseudomonas syringae pv. tomato (strain ATCC BAA-871 / DC3000) protein is Glycerol-3-phosphate acyltransferase.